Reading from the N-terminus, the 78-residue chain is D-alanyl carrier protein (78 aa).

In terms of domain architecture, Carrier spans 1–78; sequence MAFRENVLEI…MIITQLEALK (78 aa). The residue at position 36 (S36) is an O-(pantetheine 4'-phosphoryl)serine.

It belongs to the DltC family. 4'-phosphopantetheine is transferred from CoA to a specific serine of apo-DCP.

The protein resides in the cytoplasm. It participates in cell wall biogenesis; lipoteichoic acid biosynthesis. Its function is as follows. Carrier protein involved in the D-alanylation of lipoteichoic acid (LTA). The loading of thioester-linked D-alanine onto DltC is catalyzed by D-alanine--D-alanyl carrier protein ligase DltA. The DltC-carried D-alanyl group is further transferred to cell membrane phosphatidylglycerol (PG) by forming an ester bond, probably catalyzed by DltD. D-alanylation of LTA plays an important role in modulating the properties of the cell wall in Gram-positive bacteria, influencing the net charge of the cell wall. The protein is D-alanyl carrier protein of Listeria monocytogenes serotype 4b (strain CLIP80459).